The primary structure comprises 277 residues: Shikimate dehydrogenase (NADP(+)) (277 aa).

Residues Ser15–Ser17 and Thr64 contribute to the shikimate site. Catalysis depends on Lys68, which acts as the Proton acceptor. Positions 89 and 104 each coordinate shikimate. Residues Gly129–Ala133, Asn153–Arg158, and Met217 each bind NADP(+). Tyr219 is a binding site for shikimate. Position 242 (Gly242) interacts with NADP(+).

The protein belongs to the shikimate dehydrogenase family. In terms of assembly, homodimer.

The enzyme catalyses shikimate + NADP(+) = 3-dehydroshikimate + NADPH + H(+). It functions in the pathway metabolic intermediate biosynthesis; chorismate biosynthesis; chorismate from D-erythrose 4-phosphate and phosphoenolpyruvate: step 4/7. In terms of biological role, involved in the biosynthesis of the chorismate, which leads to the biosynthesis of aromatic amino acids. Catalyzes the reversible NADPH linked reduction of 3-dehydroshikimate (DHSA) to yield shikimate (SA). This Hydrogenovibrio crunogenus (strain DSM 25203 / XCL-2) (Thiomicrospira crunogena) protein is Shikimate dehydrogenase (NADP(+)).